The chain runs to 116 residues: Ribosome-binding factor A (116 aa).

The protein belongs to the RbfA family. In terms of assembly, monomer. Binds 30S ribosomal subunits, but not 50S ribosomal subunits or 70S ribosomes.

The protein resides in the cytoplasm. Functionally, one of several proteins that assist in the late maturation steps of the functional core of the 30S ribosomal subunit. Associates with free 30S ribosomal subunits (but not with 30S subunits that are part of 70S ribosomes or polysomes). Required for efficient processing of 16S rRNA. May interact with the 5'-terminal helix region of 16S rRNA. The polypeptide is Ribosome-binding factor A (Staphylococcus epidermidis (strain ATCC 35984 / DSM 28319 / BCRC 17069 / CCUG 31568 / BM 3577 / RP62A)).